The primary structure comprises 391 residues: MIPSKGKYYFTSESVTEGHPDKVADQISDAVLDVLLAQDPNSRVACETLVTTGMAVIAGEITTRGYADLPHVVRETIRNIGYNSSEMGFDWQTCAVISSIDKQSADIAQGVDRATNEDQGAGDQGMMFGFACDETATLMPAPIYWAHQLSQRLTEVRKDGTVDIFRPDGKTQVSFEYVDGKPVRINNVVVSTQHKDSASQADIIDAVKTHVIRPILEPSGFFDEKACDIFINTTGRFVIGGPMGDCGLTGRKIIQDTYGGMGHHGGGAFSGKDASKVDRSGAYMARYIAKNVVASGLAPKCEVQIAYCIGVAEPVSVLVSSQGTASVPDEVLTRAVREVFDLRPFHITRRLDLLRPIYGKTSCYGHFGRELPEFTWEHTDAAADLRTAAKV.

Position 19 (histidine 19) interacts with ATP. Position 21 (aspartate 21) interacts with Mg(2+). Residue glutamate 47 coordinates K(+). Positions 60 and 103 each coordinate L-methionine. Residues 103-113 (QSADIAQGVDR) are flexible loop. Residues 168–170 (DGK), 236–237 (RF), aspartate 245, 251–252 (RK), alanine 268, and lysine 272 each bind ATP. Position 245 (aspartate 245) interacts with L-methionine. Lysine 276 is an L-methionine binding site.

The protein belongs to the AdoMet synthase family. Homotetramer; dimer of dimers. Requires Mg(2+) as cofactor. K(+) is required as a cofactor.

It is found in the cytoplasm. It carries out the reaction L-methionine + ATP + H2O = S-adenosyl-L-methionine + phosphate + diphosphate. It functions in the pathway amino-acid biosynthesis; S-adenosyl-L-methionine biosynthesis; S-adenosyl-L-methionine from L-methionine: step 1/1. In terms of biological role, catalyzes the formation of S-adenosylmethionine (AdoMet) from methionine and ATP. The overall synthetic reaction is composed of two sequential steps, AdoMet formation and the subsequent tripolyphosphate hydrolysis which occurs prior to release of AdoMet from the enzyme. The protein is S-adenosylmethionine synthase of Nitratidesulfovibrio vulgaris (strain ATCC 29579 / DSM 644 / CCUG 34227 / NCIMB 8303 / VKM B-1760 / Hildenborough) (Desulfovibrio vulgaris).